The following is a 61-amino-acid chain: uncharacterized protein (61 aa).

The segment at 39–61 (PRPFTPGLADPRRLGPRRVQAAQ) is disordered.

This is an uncharacterized protein from Pan troglodytes (Chimpanzee).